Reading from the N-terminus, the 370-residue chain is Developmentally-regulated GTP-binding protein 1 homolog (370 aa).

The region spanning 65–292 (ARVGLIGFPS…LLDKIWEYLK (228 aa)) is the OBG-type G domain. Residues 71 to 78 (GFPSVGKS), 117 to 121 (DLPGI), and 250 to 253 (NKID) each bind GTP. The TGS domain occupies 292 to 369 (KLIRVYTKPK…ADEDIVQIVK (78 aa)).

Belongs to the TRAFAC class OBG-HflX-like GTPase superfamily. OBG GTPase family.

The sequence is that of Developmentally-regulated GTP-binding protein 1 homolog (drg1) from Dictyostelium discoideum (Social amoeba).